Here is a 161-residue protein sequence, read N- to C-terminus: uncharacterized protein (161 aa).

This is an uncharacterized protein from Acidianus convivator (ATV).